Consider the following 179-residue polypeptide: MIMGSIARRYAKALFSLAVEKGRVEPWSESLQSLKEGVEGSPDLREVLSNPVYSREQRRAIVEKLAAALRLESEPANLLFLLGDRNRLGYLGAIVDTFRALADEHLGRVRAKVTSAVPLDGSAAQAIADRLSQATQATVLLDREVDPALLGGVVAQVGSLVYDGSLRTQLEDLRRQLKQ.

The protein belongs to the ATPase delta chain family. F-type ATPases have 2 components, F(1) - the catalytic core - and F(0) - the membrane proton channel. F(1) has five subunits: alpha(3), beta(3), gamma(1), delta(1), epsilon(1). F(0) has three main subunits: a(1), b(2) and c(10-14). The alpha and beta chains form an alternating ring which encloses part of the gamma chain. F(1) is attached to F(0) by a central stalk formed by the gamma and epsilon chains, while a peripheral stalk is formed by the delta and b chains.

It localises to the cell inner membrane. In terms of biological role, f(1)F(0) ATP synthase produces ATP from ADP in the presence of a proton or sodium gradient. F-type ATPases consist of two structural domains, F(1) containing the extramembraneous catalytic core and F(0) containing the membrane proton channel, linked together by a central stalk and a peripheral stalk. During catalysis, ATP synthesis in the catalytic domain of F(1) is coupled via a rotary mechanism of the central stalk subunits to proton translocation. Its function is as follows. This protein is part of the stalk that links CF(0) to CF(1). It either transmits conformational changes from CF(0) to CF(1) or is implicated in proton conduction. The polypeptide is ATP synthase subunit delta (Anaeromyxobacter sp. (strain Fw109-5)).